A 1013-amino-acid polypeptide reads, in one-letter code: Poly [ADP-ribose] polymerase 1 (1013 aa).

2 consecutive PARP-type zinc fingers follow at residues 10–92 (YKAE…ESGG) and 113–203 (FAVE…PAVK). Zn(2+)-binding residues include Cys-22, Cys-25, His-54, Cys-57, Cys-125, Cys-128, His-159, and Cys-162. Residues 202 to 228 (VKSEGKRKADEVDGGVSKKQKKEDEKL) form a disordered region. The Nuclear localization signal signature appears at 207–209 (KRK). The region spanning 219–353 (KKQKKEDEKL…FKRQDRVFPK (135 aa)) is the PADR1 zinc-binding domain. Residues 284 to 326 (GSLKPCETCKGQLVFKSDAYYCTGDISAWTKCVFKTQTPDRKD) are zinc ribbon. Cys-289, Cys-292, Cys-305, and Cys-315 together coordinate Zn(2+). The disordered stretch occupies residues 353–385 (KDAPPAAATPSSGSTTSAATSVSSASKNLTEAP). Residues 356 to 378 (PPAAATPSSGSTTSAATSVSSAS) are compositionally biased toward low complexity. The interval 365–523 (GSTTSAATSV…EGGSKSKKMK (159 aa)) is automodification domain. One can recognise a BRCT domain in the interval 385 to 461 (PADKPLTGMK…RVVADDFLTD (77 aa)). A polyADP-ribosyl glutamic acid mark is found at Glu-413, Glu-435, Glu-444, Glu-445, Glu-464, Glu-471, Glu-484, and Glu-488. Over residues 494-507 (AATKSTGAHSSKST) the composition is skewed to low complexity. Residues 494–522 (AATKSTGAHSSKSTGKVKEEEGGSKSKKM) are disordered. PolyADP-ribosyl glutamic acid occurs at positions 512 and 513. The WGR domain maps to 541–637 (CAHVLEQNGK…SNFTKYPNKF (97 aa)). Residues 661 to 778 (KSQLEKPVQD…DIEVAYSLLR (118 aa)) enclose the PARP alpha-helical domain. Positions 787–1013 (DPIDINYEKL…IRFNYQTSLW (227 aa)) constitute a PARP catalytic domain. NAD(+) is bound by residues 861–863 (HGS), Gly-870, Arg-877, and Ser-903. Glu-987 acts as the For poly [ADP-ribose] polymerase activity in catalysis.

It belongs to the ARTD/PARP family. In terms of assembly, homodimer; PARP-type zinc-fingers from separate parp1 molecules form a dimer module that specifically recognizes DNA strand breaks. Post-translationally, poly-ADP-ribosylated on serine, glutamate and aspartate residues by autocatalysis. Auto-ADP-ribosylation on serine takes place following interaction with HPF1. Auto poly-ADP-ribosylation on serine residues promotes its dissociation from chromatin.

The protein resides in the chromosome. It is found in the nucleus. Its subcellular location is the nucleolus. The protein localises to the cytoplasm. It localises to the cytosol. The enzyme catalyses NAD(+) + (ADP-D-ribosyl)n-acceptor = nicotinamide + (ADP-D-ribosyl)n+1-acceptor + H(+).. The catalysed reaction is L-seryl-[protein] + NAD(+) = O-(ADP-D-ribosyl)-L-seryl-[protein] + nicotinamide + H(+). It catalyses the reaction L-aspartyl-[protein] + NAD(+) = 4-O-(ADP-D-ribosyl)-L-aspartyl-[protein] + nicotinamide. It carries out the reaction L-glutamyl-[protein] + NAD(+) = 5-O-(ADP-D-ribosyl)-L-glutamyl-[protein] + nicotinamide. The enzyme catalyses L-tyrosyl-[protein] + NAD(+) = O-(ADP-D-ribosyl)-L-tyrosyl-[protein] + nicotinamide + H(+). The catalysed reaction is L-histidyl-[protein] + NAD(+) = N(tele)-(ADP-D-ribosyl)-L-histidyl-[protein] + nicotinamide + H(+). With respect to regulation, ADP-ribosyltransferase activity is regulated via an allosteric activation mechanism. In absence of activation signal, parp1 is autoinhibited by the PARP alpha-helical domain (also named HD region), which prevents effective NAD(+)-binding. Activity is highly stimulated by signals, such as DNA strand breaks. Binding to damaged DNA unfolds the PARP alpha-helical domain, relieving autoinhibition. Poly-ADP-ribosyltransferase activity is tightly regulated and parp1 is removed from damaged chromatin following initial poly-ADP-ribosylation of chromatin to avoid prolonged residence (trapping) that has cytotoxic consequences. A number of factors or post-translational modifications (auto-poly-ADP-ribosylation) promote parp1 removal from chromatin. Functionally, poly-ADP-ribosyltransferase that mediates poly-ADP-ribosylation of proteins and plays a key role in DNA repair. Mediates glutamate, aspartate, serine, histidine or tyrosine ADP-ribosylation of proteins: the ADP-D-ribosyl group of NAD(+) is transferred to the acceptor carboxyl group of target residues and further ADP-ribosyl groups are transferred to the 2'-position of the terminal adenosine moiety, building up a polymer with an average chain length of 20-30 units. Serine ADP-ribosylation of proteins constitutes the primary form of ADP-ribosylation of proteins in response to DNA damage. Specificity for the different amino acids is conferred by interacting factors, such as hpf1 and nmnat1. Following interaction with hpf1, catalyzes serine ADP-ribosylation of target proteins; hpf1 confers serine specificity by completing the parp1 active site. Also catalyzes tyrosine ADP-ribosylation of target proteins following interaction with hpf1. Following interaction with nmnat1, catalyzes glutamate and aspartate ADP-ribosylation of target proteins; nmnat1 confers glutamate and aspartate specificity. Parp1 initiates the repair of DNA breaks: recognizes and binds DNA breaks within chromatin and recruits hpf1, licensing serine ADP-ribosylation of target proteins, such as histones (H2BS6ADPr and H3S10ADPr), thereby promoting decompaction of chromatin and the recruitment of repair factors leading to the reparation of DNA strand breaks. In addition to base excision repair (BER) pathway, also involved in double-strand breaks (DSBs) repair. Mediates the poly-ADP-ribosylation of a number of proteins. In addition to proteins, also able to ADP-ribosylate DNA: catalyzes ADP-ribosylation of DNA strand break termini containing terminal phosphates and a 2'-OH group in single- and double-stranded DNA, respectively. Parp1-mediated DNA repair in neurons plays a role in sleep: senses DNA damage in neurons and promotes sleep, facilitating efficient DNA repair. In addition to DNA repair, also involved in other processes, such as transcription regulation, programmed cell death, membrane repair, adipogenesis and innate immunity. Acts as a repressor of transcription: binds to nucleosomes and modulates chromatin structure in a manner similar to histone H1, thereby altering RNA polymerase II. Acts both as a positive and negative regulator of transcription elongation, depending on the context. Poly-ADP-ribose chains generated by parp1 also play a role in poly-ADP-ribose-dependent cell death, a process named parthanatos. Also acts as a negative regulator of the cGAS-STING pathway by mediating poly-ADP-ribosylation and inactivation of cgas. Acts as a negative regulator of adipogenesis by catalyzing poly ADP-ribosylation of histone H2B on 'Glu-35' (H2BE35ADPr). This chain is Poly [ADP-ribose] polymerase 1, found in Danio rerio (Zebrafish).